Consider the following 275-residue polypeptide: Phosphatidylglycerol--prolipoprotein diacylglyceryl transferase (275 aa).

A run of 4 helical transmembrane segments spans residues 20-40 (FTIH…LLLA), 58-78 (LLWA…VFQW), 88-108 (IIAI…GFIV), and 118-138 (LSSW…QGIG). R139 is an a 1,2-diacyl-sn-glycero-3-phospho-(1'-sn-glycerol) binding site. The next 2 membrane-spanning stretches (helical) occupy residues 209-229 (GEIF…IEGM) and 239-259 (IRIS…ILII).

The protein belongs to the Lgt family.

Its subcellular location is the cell membrane. It catalyses the reaction L-cysteinyl-[prolipoprotein] + a 1,2-diacyl-sn-glycero-3-phospho-(1'-sn-glycerol) = an S-1,2-diacyl-sn-glyceryl-L-cysteinyl-[prolipoprotein] + sn-glycerol 1-phosphate + H(+). It participates in protein modification; lipoprotein biosynthesis (diacylglyceryl transfer). Its function is as follows. Catalyzes the transfer of the diacylglyceryl group from phosphatidylglycerol to the sulfhydryl group of the N-terminal cysteine of a prolipoprotein, the first step in the formation of mature lipoproteins. In Limosilactobacillus reuteri (strain DSM 20016) (Lactobacillus reuteri), this protein is Phosphatidylglycerol--prolipoprotein diacylglyceryl transferase.